Reading from the N-terminus, the 89-residue chain is Islet amyloid polypeptide (89 aa).

An N-terminal signal peptide occupies residues 1-22 (MCLLKLPVVLIVLLVALHHLKA). A propeptide spanning residues 23–31 (TPIESNQVE) is cleaved from the precursor. Cysteine 35 and cysteine 40 are disulfide-bonded. Tyrosine 70 bears the Tyrosine amide mark. Positions 74-89 (STVDILNREPLNYLPF) are excised as a propeptide.

It belongs to the calcitonin family. In terms of assembly, can form homodimers. Interacts with IDE and INS. Interaction with INS inhibits homodimerization and fibril formation.

It is found in the secreted. Its function is as follows. Amylin/IAPP is a glucoregulatory peptide hormone that plays an important role in the regulation of energy homeostasis. Selectively inhibits insulin-stimulated glucose utilization and glycogen deposition in muscle, while not affecting adipocyte glucose metabolism. IAPP function is mediated by the CALCR-RAMPs (AMYRs) receptor complexes. Amylin can also bind CALCR receptor in the absence of RAMPs, although it is more selective for AMYRs. The polypeptide is Islet amyloid polypeptide (IAPP) (Felis catus (Cat)).